The primary structure comprises 197 residues: Small ribosomal subunit protein uS4 (197 aa).

In terms of domain architecture, S4 RNA-binding spans 94–158; the sequence is RRLDNVIYRF…LKKYLYDYKN (65 aa).

Belongs to the universal ribosomal protein uS4 family. Part of the 30S ribosomal subunit. Contacts protein S5. The interaction surface between S4 and S5 is involved in control of translational fidelity.

Its function is as follows. One of the primary rRNA binding proteins, it binds directly to 16S rRNA where it nucleates assembly of the body of the 30S subunit. Functionally, with S5 and S12 plays an important role in translational accuracy. The sequence is that of Small ribosomal subunit protein uS4 (rpsD) from Carsonella ruddii (strain PV).